The chain runs to 513 residues: Cobyric acid synthase (513 aa).

Positions 252–457 (KIDIAVIRLP…LHGIFDEEGI (206 aa)) constitute a GATase cobBQ-type domain. Residue Cys-333 is the Nucleophile of the active site. His-449 is an active-site residue.

It belongs to the CobB/CobQ family. CobQ subfamily.

Its pathway is cofactor biosynthesis; adenosylcobalamin biosynthesis. Its function is as follows. Catalyzes amidations at positions B, D, E, and G on adenosylcobyrinic A,C-diamide. NH(2) groups are provided by glutamine, and one molecule of ATP is hydrogenolyzed for each amidation. In Lachnoclostridium phytofermentans (strain ATCC 700394 / DSM 18823 / ISDg) (Clostridium phytofermentans), this protein is Cobyric acid synthase.